A 126-amino-acid polypeptide reads, in one-letter code: Histone H2B type 1-K (126 aa).

Residues 1–12 (MPEPAKSAPAPK) are compositionally biased toward low complexity. The tract at residues 1 to 36 (MPEPAKSAPAPKKGSKKAVTKAQKIDGKKRKRSRKE) is disordered. Pro-2 bears the N-acetylproline mark. The residue at position 3 (Glu-3) is an ADP-ribosyl glutamic acid. Lys-6 is modified (N6-(2-hydroxyisobutyryl)lysine; alternate). Lys-6 carries the N6-(beta-hydroxybutyryl)lysine; alternate modification. Lys-6 carries the post-translational modification N6-acetyllysine; alternate. Position 6 is an N6-butyryllysine; alternate (Lys-6). N6-crotonyllysine; alternate is present on Lys-6. Residue Lys-6 is modified to N6-lactoyllysine; alternate. Residue Lys-6 forms a Glycyl lysine isopeptide (Lys-Gly) (interchain with G-Cter in SUMO2); alternate linkage. Residue Ser-7 is modified to ADP-ribosylserine. Residue Lys-12 is modified to N6-(beta-hydroxybutyryl)lysine; alternate. Residues Lys-12 and Lys-13 each carry the N6-acetyllysine; alternate modification. Lys-12 and Lys-13 each carry N6-crotonyllysine; alternate. Residue Lys-12 is modified to N6-lactoyllysine; alternate. At Lys-13 the chain carries N6-(2-hydroxyisobutyryl)lysine; alternate. Ser-15 bears the Phosphoserine; by STK4/MST1 mark. 4 positions are modified to N6-acetyllysine; alternate: Lys-16, Lys-17, Lys-21, and Lys-24. Residues Lys-16, Lys-17, Lys-21, Lys-24, and Lys-35 each carry the N6-crotonyllysine; alternate modification. Residues Lys-16, Lys-17, Lys-21, and Lys-24 each carry the N6-lactoyllysine; alternate modification. Position 17 is an N6-glutaryllysine; alternate (Lys-17). Lys-21, Lys-24, and Lys-35 each carry N6-(2-hydroxyisobutyryl)lysine; alternate. Lys-21 is modified (N6-(beta-hydroxybutyryl)lysine; alternate). Lys-21 is modified (N6-butyryllysine; alternate). A Glycyl lysine isopeptide (Lys-Gly) (interchain with G-Cter in SUMO2); alternate cross-link involves residue Lys-21. Residue Lys-35 is modified to N6-(beta-hydroxybutyryl)lysine; alternate. The residue at position 35 (Lys-35) is an N6-glutaryllysine; alternate. Position 35 is an N6-succinyllysine; alternate (Lys-35). Lys-35 participates in a covalent cross-link: Glycyl lysine isopeptide (Lys-Gly) (interchain with G-Cter in ubiquitin); alternate. Glu-36 carries the post-translational modification PolyADP-ribosyl glutamic acid. A Phosphoserine; by AMPK modification is found at Ser-37. N6-(2-hydroxyisobutyryl)lysine; alternate is present on residues Lys-44, Lys-47, and Lys-58. Lys-44 carries the post-translational modification N6-lactoyllysine; alternate. An N6-glutaryllysine; alternate mark is found at Lys-44 and Lys-47. Position 47 is an N6-methyllysine; alternate (Lys-47). Lys-58 carries the N6,N6-dimethyllysine; alternate modification. Arg-80 is subject to Dimethylated arginine. The residue at position 86 (Lys-86) is an N6-(2-hydroxyisobutyryl)lysine; alternate. Lys-86 bears the N6-acetyllysine; alternate mark. At Lys-86 the chain carries N6-lactoyllysine; alternate. Lys-86 carries the N6,N6,N6-trimethyllysine; alternate modification. Omega-N-methylarginine is present on residues Arg-87 and Arg-93. The residue at position 109 (Lys-109) is an N6-(2-hydroxyisobutyryl)lysine; alternate. At Lys-109 the chain carries N6-lactoyllysine; alternate. An N6-glutaryllysine; alternate modification is found at Lys-109. N6-methyllysine; alternate is present on Lys-109. An O-linked (GlcNAc) serine glycan is attached at Ser-113. Position 116 is a phosphothreonine (Thr-116). An N6-(2-hydroxyisobutyryl)lysine; alternate mark is found at Lys-117 and Lys-121. An N6-(beta-hydroxybutyryl)lysine; alternate modification is found at Lys-117. 2 positions are modified to N6-lactoyllysine; alternate: Lys-117 and Lys-121. N6-glutaryllysine; alternate occurs at positions 117 and 121. An N6-succinyllysine; alternate mark is found at Lys-117 and Lys-121. The residue at position 117 (Lys-117) is an N6-methylated lysine; alternate. Lys-121 is covalently cross-linked (Glycyl lysine isopeptide (Lys-Gly) (interchain with G-Cter in ubiquitin); alternate).

The protein belongs to the histone H2B family. In terms of assembly, the nucleosome is a histone octamer containing two molecules each of H2A, H2B, H3 and H4 assembled in one H3-H4 heterotetramer and two H2A-H2B heterodimers. The octamer wraps approximately 147 bp of DNA. In terms of processing, monoubiquitination at Lys-35 (H2BK34Ub) by the MSL1/MSL2 dimer is required for histone H3 'Lys-4' (H3K4me) and 'Lys-79' (H3K79me) methylation and transcription activation at specific gene loci, such as HOXA9 and MEIS1 loci. Similarly, monoubiquitination at Lys-121 (H2BK120Ub) by the RNF20/40 complex gives a specific tag for epigenetic transcriptional activation and is also prerequisite for histone H3 'Lys-4' and 'Lys-79' methylation. It also functions cooperatively with the FACT dimer to stimulate elongation by RNA polymerase II. H2BK120Ub also acts as a regulator of mRNA splicing: deubiquitination by USP49 is required for efficient cotranscriptional splicing of a large set of exons. Phosphorylated on Ser-15 (H2BS14ph) by STK4/MST1 during apoptosis; which facilitates apoptotic chromatin condensation. Also phosphorylated on Ser-15 in response to DNA double strand breaks (DSBs), and in correlation with somatic hypermutation and immunoglobulin class-switch recombination. Phosphorylation at Ser-37 (H2BS36ph) by AMPK in response to stress promotes transcription. Post-translationally, glcNAcylation at Ser-113 promotes monoubiquitination of Lys-121. It fluctuates in response to extracellular glucose, and associates with transcribed genes. In terms of processing, ADP-ribosylated by PARP1 or PARP2 on Ser-7 (H2BS6ADPr) in response to DNA damage. H2BS6ADPr promotes recruitment of CHD1L. Mono-ADP-ribosylated on Glu-3 (H2BE2ADPr) by PARP3 in response to single-strand breaks. Poly ADP-ribosylation on Glu-36 (H2BE35ADPr) by PARP1 regulates adipogenesis: it inhibits phosphorylation at Ser-37 (H2BS36ph), thereby blocking expression of pro-adipogenetic genes. Crotonylation (Kcr) is specifically present in male germ cells and marks testis-specific genes in post-meiotic cells, including X-linked genes that escape sex chromosome inactivation in haploid cells. Crotonylation marks active promoters and enhancers and confers resistance to transcriptional repressors. It is also associated with post-meiotically activated genes on autosomes. Post-translationally, lactylated in macrophages by EP300/P300 by using lactoyl-CoA directly derived from endogenous or exogenous lactate, leading to stimulates gene transcription.

It localises to the nucleus. The protein resides in the chromosome. Functionally, core component of nucleosome. Nucleosomes wrap and compact DNA into chromatin, limiting DNA accessibility to the cellular machineries which require DNA as a template. Histones thereby play a central role in transcription regulation, DNA repair, DNA replication and chromosomal stability. DNA accessibility is regulated via a complex set of post-translational modifications of histones, also called histone code, and nucleosome remodeling. In Bos taurus (Bovine), this protein is Histone H2B type 1-K.